Consider the following 451-residue polypeptide: Protein NINJA homolog 1 (451 aa).

Disordered stretches follow at residues Met1–Pro223, Ile321–Lys346, and Asp427–Asn451. Residues Lys23–Pro35 are compositionally biased toward basic and acidic residues. 3 stretches are compositionally biased toward polar residues: residues Glu38 to Pro49, Pro86 to Val103, and Ile143 to Gly153. A compositionally biased stretch (acidic residues) spans Glu154 to Ala163. Residues Ser207–Gly216 are compositionally biased toward low complexity.

Belongs to the Ninja family. In terms of assembly, interacts with TIFY10C/JAZ8. Interacts with TIFY11A/JAZ9.

Its subcellular location is the nucleus. The protein is Protein NINJA homolog 1 of Oryza sativa subsp. japonica (Rice).